Here is a 548-residue protein sequence, read N- to C-terminus: Hydroxylamine reductase (548 aa).

The [4Fe-4S] cluster site is built by Cys3, Cys6, Cys15, and Cys21. His239, Glu263, Cys307, Cys401, Cys429, Cys454, Glu489, and Lys491 together coordinate hybrid [4Fe-2O-2S] cluster. Cys401 bears the Cysteine persulfide mark.

It belongs to the HCP family. [4Fe-4S] cluster is required as a cofactor. Hybrid [4Fe-2O-2S] cluster serves as cofactor.

The protein localises to the cytoplasm. It carries out the reaction A + NH4(+) + H2O = hydroxylamine + AH2 + H(+). In terms of biological role, catalyzes the reduction of hydroxylamine to form NH(3) and H(2)O. The polypeptide is Hydroxylamine reductase (Desulfosudis oleivorans (strain DSM 6200 / JCM 39069 / Hxd3) (Desulfococcus oleovorans)).